A 78-amino-acid chain; its full sequence is cAMP-dependent protein kinase inhibitor beta (78 aa).

Residues M1–D10 are compositionally biased toward basic and acidic residues. A disordered region spans residues M1 to K78. A compositionally biased stretch (polar residues) spans I33 to T42. A compositionally biased stretch (basic and acidic residues) spans S53–K78.

It belongs to the PKI family.

Functionally, extremely potent competitive inhibitor of cAMP-dependent protein kinase activity, this protein interacts with the catalytic subunit of the enzyme after the cAMP-induced dissociation of its regulatory chains. The polypeptide is cAMP-dependent protein kinase inhibitor beta (PKIB) (Homo sapiens (Human)).